A 138-amino-acid chain; its full sequence is Acidic phospholipase A2 AplTX-I (138 aa).

The signal sequence occupies residues 1 to 16; sequence MRTLWIMAVLLLGVEG. Disulfide bonds link Cys42–Cys131, Cys44–Cys60, Cys59–Cys111, Cys65–Cys138, Cys66–Cys104, Cys73–Cys97, and Cys91–Cys102. Tyr43, Gly45, and Gly47 together coordinate Ca(2+). His63 is an active-site residue. Asp64 serves as a coordination point for Ca(2+). Asp105 is a catalytic residue.

As to quaternary structure, monomer. Ca(2+) serves as cofactor. Expressed by the venom gland.

The protein localises to the secreted. It catalyses the reaction a 1,2-diacyl-sn-glycero-3-phosphocholine + H2O = a 1-acyl-sn-glycero-3-phosphocholine + a fatty acid + H(+). With respect to regulation, inhibited by divalent cations different from calcium ions (cadmium, magnesium, manganese, zinc), since they act as competitive antagonists of this cofactor. Its function is as follows. Snake venom phospholipase A2 (PLA2) that triggers a high neuromuscular toxicity in chick biventer cervicis preparations, but not in mouse phrenic nerve-diaphragm (PND) preparations, suggesting a selective neurotoxin activity towards birds. Does not induce myotoxic, coagulant, anticoagulant, edema, and antibacterial activities. PLA2 catalyzes the calcium-dependent hydrolysis of the 2-acyl groups in 3-sn-phosphoglycerides. This chain is Acidic phospholipase A2 AplTX-I, found in Agkistrodon piscivorus leucostoma (Western cottonmouth).